The chain runs to 65 residues: Large ribosomal subunit protein bL35 (65 aa).

The segment at 1-26 (MPKMKTHRGAAKRFRKTGTGKLKRGK) is disordered.

It belongs to the bacterial ribosomal protein bL35 family.

This Clostridium beijerinckii (strain ATCC 51743 / NCIMB 8052) (Clostridium acetobutylicum) protein is Large ribosomal subunit protein bL35.